A 253-amino-acid chain; its full sequence is tRNA (guanine-N(1)-)-methyltransferase (253 aa).

S-adenosyl-L-methionine-binding positions include Gly-111 and 131–136 (LGDFVL).

This sequence belongs to the RNA methyltransferase TrmD family. In terms of assembly, homodimer.

Its subcellular location is the cytoplasm. It carries out the reaction guanosine(37) in tRNA + S-adenosyl-L-methionine = N(1)-methylguanosine(37) in tRNA + S-adenosyl-L-homocysteine + H(+). Specifically methylates guanosine-37 in various tRNAs. This is tRNA (guanine-N(1)-)-methyltransferase from Synechococcus sp. (strain JA-3-3Ab) (Cyanobacteria bacterium Yellowstone A-Prime).